The following is a 259-amino-acid chain: HTH-type transcriptional regulator Rv1719 (259 aa).

Residues 13–75 (IQVIARAAEL…GARGPYRLGP (63 aa)) form the HTH iclR-type domain. Positions 35 to 54 (QAEIGERVGMARSTVSRILN) form a DNA-binding region, H-T-H motif. The region spanning 88 to 259 (VVTEMHPFLT…AWFNGTEDRK (172 aa)) is the IclR-ED domain.

In terms of assembly, homodimer.

Its function is as follows. Binds to the upstream region of Rv1714 and probably modulates the expression of the downstream gene(s). The sequence is that of HTH-type transcriptional regulator Rv1719 from Mycobacterium tuberculosis (strain ATCC 25618 / H37Rv).